The following is a 236-amino-acid chain: Rab-like protein 3 (236 aa).

The tract at residues 1–236 is small GTPase-like; sequence MASLDRVKVL…GGTLKSLHYD (236 aa). Residues 16–21, 148–150, and 179–180 each bind GTP; these read GVGKSS, KLD, and DC.

Belongs to the small GTPase superfamily. Rab family. As to quaternary structure, homodimer. Interacts with GPR89; the interaction stabilizes GPR89. Interacts with RAP1GDS1.

Its function is as follows. Required for KRAS signaling regulation and modulation of cell proliferation. Regulator of KRAS prenylation, and probably prenylation of other small GTPases. Required for lymphocyte development and function. Not required for myeloid cell development. The polypeptide is Rab-like protein 3 (RABL3) (Bos taurus (Bovine)).